The chain runs to 313 residues: Porphobilinogen deaminase (313 aa).

Cys-242 is subject to S-(dipyrrolylmethanemethyl)cysteine.

It belongs to the HMBS family. As to quaternary structure, monomer. Dipyrromethane serves as cofactor.

The enzyme catalyses 4 porphobilinogen + H2O = hydroxymethylbilane + 4 NH4(+). The protein operates within porphyrin-containing compound metabolism; protoporphyrin-IX biosynthesis; coproporphyrinogen-III from 5-aminolevulinate: step 2/4. Functionally, tetrapolymerization of the monopyrrole PBG into the hydroxymethylbilane pre-uroporphyrinogen in several discrete steps. The protein is Porphobilinogen deaminase of Pseudomonas putida (strain ATCC 700007 / DSM 6899 / JCM 31910 / BCRC 17059 / LMG 24140 / F1).